The sequence spans 427 residues: Serine--tRNA ligase (427 aa).

T231–E233 is an L-serine binding site. ATP is bound at residue R262–E264. An L-serine-binding site is contributed by E285. E349–S352 lines the ATP pocket. S385 is a binding site for L-serine.

This sequence belongs to the class-II aminoacyl-tRNA synthetase family. Type-1 seryl-tRNA synthetase subfamily. Homodimer. The tRNA molecule binds across the dimer.

Its subcellular location is the cytoplasm. It carries out the reaction tRNA(Ser) + L-serine + ATP = L-seryl-tRNA(Ser) + AMP + diphosphate + H(+). The catalysed reaction is tRNA(Sec) + L-serine + ATP = L-seryl-tRNA(Sec) + AMP + diphosphate + H(+). Its pathway is aminoacyl-tRNA biosynthesis; selenocysteinyl-tRNA(Sec) biosynthesis; L-seryl-tRNA(Sec) from L-serine and tRNA(Sec): step 1/1. In terms of biological role, catalyzes the attachment of serine to tRNA(Ser). Is also able to aminoacylate tRNA(Sec) with serine, to form the misacylated tRNA L-seryl-tRNA(Sec), which will be further converted into selenocysteinyl-tRNA(Sec). In Rhizobium etli (strain ATCC 51251 / DSM 11541 / JCM 21823 / NBRC 15573 / CFN 42), this protein is Serine--tRNA ligase.